The primary structure comprises 483 residues: Zinc metalloproteinase/disintegrin (483 aa).

The signal sequence occupies residues 1-20 (MIQVLLVTLCLAAFPYQGNS). Residues 21–191 (IILESGNVND…KASQLNLTPE (171 aa)) constitute a propeptide that is removed on maturation. The 197-residue stretch at 198 to 394 (RYIELVVVAD…HNPQCMLNEP (197 aa)) folds into the Peptidase M12B domain. Ca(2+) is bound by residues glutamate 201 and aspartate 285. 3 disulfides stabilise this stretch: cysteine 309–cysteine 389, cysteine 349–cysteine 373, and cysteine 351–cysteine 356. A Zn(2+)-binding site is contributed by histidine 334. Residue glutamate 335 is part of the active site. Histidine 338 and histidine 344 together coordinate Zn(2+). Ca(2+) is bound by residues cysteine 389 and asparagine 392. Residues 395–414 (LRTDIVSTPVSGNELWETGE) constitute a propeptide that is removed on maturation. The Disintegrin domain occupies 402 to 483 (TPVSGNELWE…AGCPRNPFHA (82 aa)). Cystine bridges form between cysteine 425-cysteine 448, cysteine 439-cysteine 445, cysteine 444-cysteine 469, and cysteine 457-cysteine 476. The short motif at 461 to 463 (KGD) is the Cell attachment site; atypical (KGD) element.

The protein belongs to the venom metalloproteinase (M12B) family. P-II subfamily. P-IIe sub-subfamily. In terms of assembly, heterodimer with piscivostatin-alpha; disulfide-linked (disintegrin). Requires Zn(2+) as cofactor. As to expression, expressed by the venom gland.

It localises to the secreted. Its function is as follows. Impairs hemostasis in the envenomed animal. Inhibits platelet aggregation induced by ADP. Acts by inhibiting fibrinogen interaction with platelet receptors GPIIb/GPIIIa (ITGA2B/ITGB3). Also inhibits platelet aggregate dissociation in human platelet-rich plasma. The sequence is that of Zinc metalloproteinase/disintegrin from Agkistrodon piscivorus piscivorus (Eastern cottonmouth).